The following is a 41-amino-acid chain: Large ribosomal subunit protein bL36 (41 aa).

It belongs to the bacterial ribosomal protein bL36 family.

The chain is Large ribosomal subunit protein bL36 (rpmJ) from Agrobacterium fabrum (strain C58 / ATCC 33970) (Agrobacterium tumefaciens (strain C58)).